We begin with the raw amino-acid sequence, 1229 residues long: MALPRPVQYGKVQRMSYGKVKEVLDLPYLLEIQKKSFQWFLDEGLREVLREISPIKDYTENLLLEFVDYYFDGPPKYSEQECKERDATYARPLKVKVRLINKETGEIKEQDIYMGEFPIMTETGTFIINGAERVIVSQLIRSPGCYFASSIDKQGRKIFSGTIIPNRGAWLEFETDTSELLSVRLDRTRKVSLTTLLKAFGLYNQQLIFNKLGEDERLKASLEKEANKGEIGNPVENALLEIYRRLRPGEPPNVENAKNLLERMYFDPRGYDLAKVGRYKLNKKLSLWKRIFNKRAAEDIVDKRTGEILVKEGEIISREAALNIQDAGINEVLVYVEDDKVFKVVGNNTVKLDRYVDFDVSDLNIKELVYLPVLNEILSTTNDVNEIKQLIKERERELVPYCLTRDDVFAATSYFLGLKYGIGHIDDIDHLGNRRVRAVGELLQNQFRIGLARMERVIRERMTIQDIDSVTPQTLINIRPVTAAIKEFFGSSPLSQFMDQVNPLAALTNKRRLSALGPGGLSRDRAGFEVRDVHHSHYGRMCPIETPEGPNIGLITSLATYARVNEYGFLETPYRKVDKKEARVTDEVVYLTADEEDTYKIAQATEPVDEEGRFINQRITVRFGEDIIEVDKHEVDLVDISPKQIVSVSTSLIPFLENDDANRALMGSNMQRQAVPLLTTESPIIGTGVEYRAAVDSGVCVLAKKDGIVEKVSADEIVIQNHDGTKDVYHLLKFKRTNQGTCFNQRPIVRKGQEVKTGEVIADGPSTDHGELALGKNVLVAFMPWEGYNYEDAILISERLVKEDVYTSIHIEEYECEARDTKLGPEEITRDIPNIGEDAIKDLDERGIIRIGAEVKSGDILVGKVTPKGETELTAEERLLRAIFGEKARETRDTSLRVPHGEGGIVVDVKVFSRDKGDELPPGVNQLVRVYVAQKRKISVGDKMAGRHGNKGVISRILPVEDMPFLPDGTPVDIVLNPLGVPSRMNIGQILETHLGYAAKALGWKVATPVFDGAKEEDIEEALNLAGLSPNGKTILYDGRTGEPFDNEVTVGYMYMLKLVHLVDDKIHARSTGPYSLVTQQPLGGKAQFGGQRFGEMEVWALEAYGAAYTLQELLTVKSDDVTGRVKTYEAIVKGENIPEPGIPESFKVLVKELQSLCLDVKLLSEDNKEIELKESIDEDEQPQGLGAFERGLEEVENGEEDDDKEKFYEDLMDASQEQDESADDDIDE.

A disordered region spans residues 1175 to 1229 (ESIDEDEQPQGLGAFERGLEEVENGEEDDDKEKFYEDLMDASQEQDESADDDIDE). Acidic residues-rich tracts occupy residues 1195-1204 (EVENGEEDDD) and 1211-1229 (DLMDASQEQDESADDDIDE).

This sequence belongs to the RNA polymerase beta chain family. In terms of assembly, the RNAP catalytic core consists of 2 alpha, 1 beta, 1 beta' and 1 omega subunit. When a sigma factor is associated with the core the holoenzyme is formed, which can initiate transcription.

It catalyses the reaction RNA(n) + a ribonucleoside 5'-triphosphate = RNA(n+1) + diphosphate. Functionally, DNA-dependent RNA polymerase catalyzes the transcription of DNA into RNA using the four ribonucleoside triphosphates as substrates. This is DNA-directed RNA polymerase subunit beta from Caldicellulosiruptor saccharolyticus (strain ATCC 43494 / DSM 8903 / Tp8T 6331).